Consider the following 317-residue polypeptide: Ribose-phosphate pyrophosphokinase (317 aa).

ATP contacts are provided by residues 41–43 and 100–101; these read DME and RQ. Residues H134 and D174 each coordinate Mg(2+). The active site involves K197. Residues R199, D223, and 227–231 each bind D-ribose 5-phosphate; that span reads DSGGT.

This sequence belongs to the ribose-phosphate pyrophosphokinase family. Class I subfamily. In terms of assembly, homohexamer. Mg(2+) serves as cofactor.

It localises to the cytoplasm. It carries out the reaction D-ribose 5-phosphate + ATP = 5-phospho-alpha-D-ribose 1-diphosphate + AMP + H(+). It functions in the pathway metabolic intermediate biosynthesis; 5-phospho-alpha-D-ribose 1-diphosphate biosynthesis; 5-phospho-alpha-D-ribose 1-diphosphate from D-ribose 5-phosphate (route I): step 1/1. In terms of biological role, involved in the biosynthesis of the central metabolite phospho-alpha-D-ribosyl-1-pyrophosphate (PRPP) via the transfer of pyrophosphoryl group from ATP to 1-hydroxyl of ribose-5-phosphate (Rib-5-P). This is Ribose-phosphate pyrophosphokinase from Bradyrhizobium diazoefficiens (strain JCM 10833 / BCRC 13528 / IAM 13628 / NBRC 14792 / USDA 110).